A 203-amino-acid chain; its full sequence is Large ribosomal subunit protein bL25 (203 aa).

Belongs to the bacterial ribosomal protein bL25 family. CTC subfamily. Part of the 50S ribosomal subunit; part of the 5S rRNA/L5/L18/L25 subcomplex. Contacts the 5S rRNA. Binds to the 5S rRNA independently of L5 and L18.

This is one of the proteins that binds to the 5S RNA in the ribosome where it forms part of the central protuberance. This Dechloromonas aromatica (strain RCB) protein is Large ribosomal subunit protein bL25.